The primary structure comprises 108 residues: DNA-directed RNA polymerase III subunit RPC10 (108 aa).

Residues Cys5, Cys8, Cys25, Cys28, Cys69, and Cys72 each contribute to the Zn(2+) site. The C4-type zinc finger occupies 5–28; sequence CPGCGNGLIVEEGQRCHRFACNTC. Residues 65–107 form a TFIIS-type zinc finger; that stretch reads TAEPCPKCEHPRAYFMQLQTRYADEPMTTFYKCCNAQCGHRWR. Residues 88 to 89 carry the Hairpin motif; it reads DE. Residues Cys98 and Cys102 each coordinate Zn(2+).

It belongs to the archaeal RpoM/eukaryotic RPA12/RPB9/RPC11 RNA polymerase family. As to quaternary structure, component of the RNA polymerase III complex consisting of 17 subunits: a ten-subunit horseshoe-shaped catalytic core composed of POLR3A/RPC1, POLR3B/RPC2, POLR1C/RPAC1, POLR1D/RPAC2, POLR3K/RPC10, POLR2E/RPABC1, POLR2F/RPABC2, POLR2H/RPABC3, POLR2K/RPABC4 and POLR2L/RPABC5; a mobile stalk composed of two subunits POLR3H/RPC8 and CRCP/RPC9, protruding from the core and functioning primarily in transcription initiation; and additional subunits homologous to general transcription factors of the RNA polymerase II machinery, POLR3C/RPC3-POLR3F/RPC6-POLR3G/RPC7 heterotrimer required for transcription initiation and POLR3D/RPC4-POLR3E/RPC5 heterodimer involved in both transcription initiation and termination.

The protein localises to the nucleus. Core component of RNA polymerase III (Pol III) which synthesizes small non-coding RNAs using the four ribonucleoside triphosphates as substrates. Can mediate Pol I proofreading of the nascent RNA transcript. Anchors into the Pol III active site to constantly monitor transcription fidelity, cleaves mis-incorporated 5'-ribonucleotides and restarts the transcription process. Once Pol III reaches the poly(dT) termination signal, can induce Pol III clamp opening and transcription termination. Pol III plays an important role in sensing and limiting infection by intracellular bacteria and DNA viruses. Acts as a nuclear and cytosolic DNA sensor involved in innate immune response. Can sense non-self dsDNA that serves as template for transcription into dsRNA. The non-self RNA polymerase III transcripts, such as Epstein-Barr virus-encoded RNAs (EBERs) induce type I interferon and NF-kappa-B through the RIG-I pathway. This chain is DNA-directed RNA polymerase III subunit RPC10 (POLR3K), found in Bos taurus (Bovine).